The primary structure comprises 209 residues: Ribonuclease HII (209 aa).

In terms of domain architecture, RNase H type-2 spans 19–208 (GLVAGVDEAG…VARALQAPVA (190 aa)). A divalent metal cation is bound by residues D25, E26, and D117.

It belongs to the RNase HII family. It depends on Mn(2+) as a cofactor. Requires Mg(2+) as cofactor.

The protein localises to the cytoplasm. It catalyses the reaction Endonucleolytic cleavage to 5'-phosphomonoester.. In terms of biological role, endonuclease that specifically degrades the RNA of RNA-DNA hybrids. The protein is Ribonuclease HII of Acidovorax ebreus (strain TPSY) (Diaphorobacter sp. (strain TPSY)).